Here is a 473-residue protein sequence, read N- to C-terminus: Ribulose bisphosphate carboxylase large chain (473 aa).

2 residues coordinate substrate: Asn116 and Thr166. Catalysis depends on Lys168, which acts as the Proton acceptor. Substrate is bound at residue Lys170. Positions 194, 196, and 197 each coordinate Mg(2+). Position 194 is an N6-carboxylysine (Lys194). The active-site Proton acceptor is the His287. The substrate site is built by Arg288, His320, and Ser372.

This sequence belongs to the RuBisCO large chain family. Type I subfamily. As to quaternary structure, heterohexadecamer of 8 large chains and 8 small chains. In R.sphaeroides the complex is approximately 500 kDa. Requires Mg(2+) as cofactor.

The enzyme catalyses 2 (2R)-3-phosphoglycerate + 2 H(+) = D-ribulose 1,5-bisphosphate + CO2 + H2O. It catalyses the reaction D-ribulose 1,5-bisphosphate + O2 = 2-phosphoglycolate + (2R)-3-phosphoglycerate + 2 H(+). In terms of biological role, ruBisCO catalyzes two reactions: the carboxylation of D-ribulose 1,5-bisphosphate, the primary event in carbon dioxide fixation, as well as the oxidative fragmentation of the pentose substrate. Both reactions occur simultaneously and in competition at the same active site. In Thiobacillus denitrificans (strain ATCC 25259 / T1), this protein is Ribulose bisphosphate carboxylase large chain.